Reading from the N-terminus, the 185-residue chain is Ribosome-recycling factor (185 aa).

The protein belongs to the RRF family.

The protein resides in the cytoplasm. Functionally, responsible for the release of ribosomes from messenger RNA at the termination of protein biosynthesis. May increase the efficiency of translation by recycling ribosomes from one round of translation to another. The protein is Ribosome-recycling factor of Bacillus cytotoxicus (strain DSM 22905 / CIP 110041 / 391-98 / NVH 391-98).